Here is a 296-residue protein sequence, read N- to C-terminus: tRNA (guanine-N(7)-)-methyltransferase (296 aa).

Residues 1-26 (MSKRTREESEMEAGPSTASPGVSVSP) are disordered. S-adenosyl-L-methionine is bound by residues glycine 101, 124 to 125 (EI), 168 to 169 (NS), and leucine 188. Aspartate 191 is an active-site residue. 266 to 268 (TEE) serves as a coordination point for S-adenosyl-L-methionine.

Belongs to the class I-like SAM-binding methyltransferase superfamily. TrmB family. Forms a complex with TRM82.

It is found in the nucleus. It catalyses the reaction guanosine(46) in tRNA + S-adenosyl-L-methionine = N(7)-methylguanosine(46) in tRNA + S-adenosyl-L-homocysteine. It functions in the pathway tRNA modification; N(7)-methylguanine-tRNA biosynthesis. In terms of biological role, catalyzes the formation of N(7)-methylguanine at position 46 (m7G46) in tRNA. The chain is tRNA (guanine-N(7)-)-methyltransferase from Cryptococcus neoformans var. neoformans serotype D (strain JEC21 / ATCC MYA-565) (Filobasidiella neoformans).